Reading from the N-terminus, the 503-residue chain is Cytochrome P450 3A12 (503 aa).

Cysteine 442 provides a ligand contact to heme.

It belongs to the cytochrome P450 family. It depends on heme as a cofactor.

The protein localises to the endoplasmic reticulum membrane. The protein resides in the microsome membrane. It catalyses the reaction an organic molecule + reduced [NADPH--hemoprotein reductase] + O2 = an alcohol + oxidized [NADPH--hemoprotein reductase] + H2O + H(+). In terms of biological role, cytochromes P450 are a group of heme-thiolate monooxygenases. In liver microsomes, this enzyme is involved in an NADPH-dependent electron transport pathway. It oxidizes a variety of structurally unrelated compounds, including steroids, fatty acids, and xenobiotics. This is Cytochrome P450 3A12 (CYP3A12) from Canis lupus familiaris (Dog).